We begin with the raw amino-acid sequence, 900 residues long: Probable 2-oxoadipate dehydrogenase complex component E1 homolog (900 aa).

It belongs to the alpha-ketoglutarate dehydrogenase family. The cofactor is thiamine diphosphate.

The protein localises to the mitochondrion. It catalyses the reaction N(6)-[(R)-lipoyl]-L-lysyl-[protein] + 2-oxoadipate + H(+) = N(6)-[(R)-S(8)-glutaryldihydrolipoyl]-L-lysyl-[protein] + CO2. Its function is as follows. 2-oxoadipate dehydrogenase (E1a) component of the 2-oxoadipate dehydrogenase complex (OADHC). Participates in the first step, rate limiting for the overall conversion of 2-oxoadipate (alpha-ketoadipate) to glutaryl-CoA and CO(2) catalyzed by the whole OADHC. Catalyzes the irreversible decarboxylation of 2-oxoadipate via the thiamine diphosphate (ThDP) cofactor and subsequent transfer of the decarboxylated acyl intermediate on an oxidized dihydrolipoyl group that is covalently amidated to the E2 enzyme (dihydrolipoyllysine-residue succinyltransferase or DLST). The chain is Probable 2-oxoadipate dehydrogenase complex component E1 homolog (odhA) from Dictyostelium discoideum (Social amoeba).